Consider the following 525-residue polypeptide: Sensory neuron membrane protein 1 (525 aa).

The Cytoplasmic portion of the chain corresponds to 1–11 (MLLPKELKYAA). Residues 12–32 (IAGGVAVFGLIFGWVLFPVIL) form a helical membrane-spanning segment. The Extracellular portion of the chain corresponds to 33-456 (KGQLKKEMAL…LKHQLFIPKR (424 aa)). Asn-67, Asn-229, and Asn-324 each carry an N-linked (GlcNAc...) asparagine glycan. Cystine bridges form between Cys-268–Cys-333, Cys-297–Cys-352, and Cys-335–Cys-341. N-linked (GlcNAc...) asparagine glycosylation occurs at Asn-440. Residues 457-477 (VVGVLRWWMVSFGSLGADIGI) traverse the membrane as a helical segment. At 478–525 (VYHFRDHIMRLAVSGDTKVSKVTPEEDPEQKDISVIGPPAQEPAKINI) the chain is on the cytoplasmic side. A disordered region spans residues 497 to 525 (SKVTPEEDPEQKDISVIGPPAQEPAKINI).

The protein belongs to the CD36 family.

Its subcellular location is the cell membrane. In terms of biological role, plays an olfactory role that is not restricted to pheromone sensitivity. This Mamestra brassicae (Cabbage moth) protein is Sensory neuron membrane protein 1.